The primary structure comprises 264 residues: Virulence plasmid protein pGP3-D (264 aa).

The polypeptide is Virulence plasmid protein pGP3-D (Chlamydia muridarum (strain MoPn / Nigg)).